A 143-amino-acid polypeptide reads, in one-letter code: Transcriptional regulator MraZ (143 aa).

SpoVT-AbrB domains are found at residues 5–47 (EYSH…PMPV) and 76–119 (AMEA…SDEN).

It belongs to the MraZ family. Forms oligomers.

It localises to the cytoplasm. It is found in the nucleoid. The sequence is that of Transcriptional regulator MraZ from Leuconostoc citreum (strain KM20).